A 490-amino-acid chain; its full sequence is Protein twist (490 aa).

Disordered regions lie at residues 48–72 (QLQHQQQHLHSHQHHQQHHQQQHAQ), 96–165 (PSNE…TGGS), and 244–264 (QQQQSQQLQQQQPHQQSHAQM). The segment covering 54 to 68 (QHLHSHQHHQQHHQQ) has biased composition (basic residues). Composition is skewed to low complexity over residues 102–134 (STSSNQSAQSTSLELNNNNTSSNTNSSGNNPSG) and 244–263 (QQQQSQQLQQQQPHQQSHAQ). 2 positions are modified to phosphoserine: Ser-325 and Ser-328. The disordered stretch occupies residues 330–361 (LDGSDAGGKAFRKPRRRLKRKPSKTEETDEFS). Basic residues predominate over residues 339 to 351 (AFRKPRRRLKRKP). The region spanning 362-413 (NQRVMANVRERQRTQSLNDAFKSLQQIIPTLPSDKLSKIQTLKLATRYIDFL) is the bHLH domain.

As to quaternary structure, efficient DNA binding requires dimerization with another bHLH protein. Homodimer. Interacts with akirin. In terms of tissue distribution, expressed in embryonic abdomen; a single cell ventrally, pairs of cells laterally and three cells dorsally in each hemisegment. In the thorax, there are patches of cells associated with the imaginal disks. During larval development, cells proliferate and, in the abdomen, they form ventral, lateral and dorsal clusters, which are the precursors of the adult abdominal muscles. In the thorax, they form populations of cells in the imaginal disks that correspond to the adepithelial cells.

The protein localises to the nucleus. Functionally, involved in the establishment and dorsoventral patterning of germ layers in the embryo. This chain is Protein twist (twi), found in Drosophila melanogaster (Fruit fly).